The primary structure comprises 136 residues: Large ribosomal subunit protein bL20 (136 aa).

Belongs to the bacterial ribosomal protein bL20 family.

Its function is as follows. Binds directly to 23S ribosomal RNA and is necessary for the in vitro assembly process of the 50S ribosomal subunit. It is not involved in the protein synthesizing functions of that subunit. In Tropheryma whipplei (strain Twist) (Whipple's bacillus), this protein is Large ribosomal subunit protein bL20.